The chain runs to 96 residues: UPF0125 protein YfjF (96 aa).

Belongs to the UPF0125 (RnfH) family.

This is UPF0125 protein YfjF (yfjF) from Escherichia coli O157:H7.